Consider the following 370-residue polypeptide: Protein-tyrosine sulfotransferase 1 (370 aa).

At 1–8 (MVGKLKQN) the chain is on the cytoplasmic side. The chain crosses the membrane as a helical; Signal-anchor for type II membrane protein span at residues 9-25 (LLLACLVISSVTVFYLG). Over 26-370 (QHAMECHHRI…KEKPQTEQVE (345 aa)) the chain is Lumenal. N60 carries N-linked (GlcNAc...) asparagine glycosylation. 3'-phosphoadenylyl sulfate is bound at residue 79-83 (RSGTT). Cysteines 97 and 157 form a disulfide. The Proton donor/acceptor role is filled by E100. An interaction with peptide substrate region spans residues 102–106 (RVIPR). 3'-phosphoadenylyl sulfate contacts are provided by R184, S192, and R196. A disulfide bridge links C226 with C234. Y239 contacts 3'-phosphoadenylyl sulfate. Residue N262 is glycosylated (N-linked (GlcNAc...) asparagine). Residues 286 to 295 (STDQVIKPVN) and K301 each bind 3'-phosphoadenylyl sulfate.

Belongs to the protein sulfotransferase family. Homodimer. Can also form heterodimers with TPST2. N-glycosylated. In terms of tissue distribution, ubiquitous. Detected in heart, brain, lung, liver, spleen, kidney, skeletal muscle and testis.

Its subcellular location is the golgi apparatus membrane. It catalyses the reaction L-tyrosyl-[protein] + 3'-phosphoadenylyl sulfate = O-sulfo-L-tyrosine-[protein] + adenosine 3',5'-bisphosphate + H(+). In terms of biological role, catalyzes the O-sulfation of tyrosine residues within acidic motifs of polypeptides, using 3'-phosphoadenylyl sulfate (PAPS) as cosubstrate. In Mus musculus (Mouse), this protein is Protein-tyrosine sulfotransferase 1 (Tpst1).